The primary structure comprises 1096 residues: Constitutive coactivator of PPAR-gamma-like protein 2 (1096 aa).

Residues 35 to 59 are compositionally biased toward low complexity; it reads QQQHLHRQLPPTAALAPGAPRAARG. Disordered stretches follow at residues 35 to 113, 508 to 579, and 971 to 1096; these read QQQH…PPQL, NYLP…DGEP, and SRSS…RKED. R58 carries the omega-N-methylarginine modification. Over residues 82–95 the composition is skewed to basic residues; it reads TRHHHPAHHFHHHG. Positions 101-113 are enriched in pro residues; that stretch reads LHPPLPPPPPPQL. The segment covering 540–559 has biased composition (basic and acidic residues); the sequence is HITEAFHHQPEWGNPNRDRG. R977 is modified (omega-N-methylarginine). Basic and acidic residues-rich tracts occupy residues 1041-1050 and 1076-1096; these read IKEEKSDHRL and NREKNHLQEQKLETVAQRKED. A Glycyl lysine isopeptide (Lys-Gly) (interchain with G-Cter in SUMO2) cross-link involves residue K1042.

This sequence belongs to the constitutive coactivator of PPAR-gamma family. As to expression, expressed at low levels in a number of tissues.

In Homo sapiens (Human), this protein is Constitutive coactivator of PPAR-gamma-like protein 2 (FAM120C).